The sequence spans 401 residues: 4-hydroxy-3-methylbut-2-en-1-yl diphosphate synthase (ferredoxin) (401 aa).

Residues Cys-306, Cys-309, Cys-340, and Glu-347 each coordinate [4Fe-4S] cluster.

It belongs to the IspG family. It depends on [4Fe-4S] cluster as a cofactor.

It catalyses the reaction (2E)-4-hydroxy-3-methylbut-2-enyl diphosphate + 2 oxidized [2Fe-2S]-[ferredoxin] + H2O = 2-C-methyl-D-erythritol 2,4-cyclic diphosphate + 2 reduced [2Fe-2S]-[ferredoxin] + H(+). Its pathway is isoprenoid biosynthesis; isopentenyl diphosphate biosynthesis via DXP pathway; isopentenyl diphosphate from 1-deoxy-D-xylulose 5-phosphate: step 5/6. Converts 2C-methyl-D-erythritol 2,4-cyclodiphosphate (ME-2,4cPP) into 1-hydroxy-2-methyl-2-(E)-butenyl 4-diphosphate. The polypeptide is 4-hydroxy-3-methylbut-2-en-1-yl diphosphate synthase (ferredoxin) (Synechococcus sp. (strain CC9902)).